The following is a 367-amino-acid chain: Glutamate 5-kinase 2 (367 aa).

Lys10 serves as a coordination point for ATP. Residues Ser50, Asp136, and Asn148 each coordinate substrate. Residues 168-169 and 210-216 each bind ATP; these read TD and TGGMATK. The PUA domain occupies 275–353; it reads SGQIVIDAGA…KQIGELLDYD (79 aa).

The protein belongs to the glutamate 5-kinase family.

It is found in the cytoplasm. It carries out the reaction L-glutamate + ATP = L-glutamyl 5-phosphate + ADP. Its pathway is amino-acid biosynthesis; L-proline biosynthesis; L-glutamate 5-semialdehyde from L-glutamate: step 1/2. Its function is as follows. Catalyzes the transfer of a phosphate group to glutamate to form L-glutamate 5-phosphate. This is Glutamate 5-kinase 2 from Pseudoalteromonas translucida (strain TAC 125).